The sequence spans 609 residues: MTCLDELAHSLESKSDTTNFKTRNSKIKTIDLYQQNELSGKHPQDQDKFYRLPAIDPIARDKKPWKEDINYFNKCYISSLALMKMCTHAQTGGSIEIMGMLVGKISGHSIIVMDTYRLPVEGTETRVNAQNEAYTYMVEYLTERQQLSNGKNEENIVGWYHSHPGYGCWLSGIDVSTQSLNQGFQDPYLAIVVDPVKTLKQGKVEIGAFRTYPEGSQQQPSMTNKTRKDQNKPHNSGANANRKILPKSKQKDFGSHADKYYSLDIEIFTSSWDDKVIEMLKDEDSLTWMKNLLVDSNNNDKILGIRKDEIRSIELIKNYELISQGNHNADEGETIFDLIEQLKIQANTPKFMLDKLTTMKFDSTFESVLYKRLLKKTQKSTTTKKNRKDLSTDIDDETMLDESDLEKNVGTGGIETSISSDDDDEEEEGEGEGNSSSRRDNNNNEVEEGPTDEVDSEYANEELLEEVGALENYNFNDLLENKSANKFLRSEQKIKHKNRPIHQRMDNSSMISEWNRLGHQQQHMPADYPYQWSSNVANLVKTSKTNRRRERLHRLQGASIDNKKQFELGLHGSPESKAKSANLVKLAKSIGLNEVFDLITLDAQQKLFG.

The region spanning 75–215 is the MPN domain; the sequence is CYISSLALMK…IGAFRTYPEG (141 aa). Residues histidine 161, histidine 163, and aspartate 174 each contribute to the Zn(2+) site. The JAMM motif signature appears at 161 to 174; sequence HSHPGYGCWLSGID. Disordered regions lie at residues 210-248 and 381-456; these read RTYP…LPKS and TTTK…EVDS. Over residues 214 to 224 the composition is skewed to polar residues; that stretch reads EGSQQQPSMTN. 3 stretches are compositionally biased toward acidic residues: residues 392–404, 420–431, and 445–456; these read TDID…DESD, SDDDDEEEEGEG, and EVEEGPTDEVDS.

The protein belongs to the peptidase M67A family. CSN5 subfamily. Component of the COP9 signalosome (CSN) complex.

The protein resides in the cytoplasm. It is found in the nucleus. In terms of biological role, catalytic Component of the COP9 signalosome (CSN) complex that acts as an regulator of the ubiquitin (Ubl) conjugation pathway by mediating the deneddylation of the cullin subunit of SCF-type E3 ubiquitin-protein ligase complexes. This is COP9 signalosome complex subunit 5 (JAB1) from Candida albicans (strain SC5314 / ATCC MYA-2876) (Yeast).